The chain runs to 1152 residues: Syntaxin-binding protein 5 (1152 aa).

Residues 14–35 (TAGSSSASQQQQQQQHPPGNRE) are disordered. The span at 17–28 (SSSASQQQQQQQ) shows a compositional bias: low complexity. 10 WD repeats span residues 62 to 95 (SALA…CYCQ), 102 to 141 (VIQL…SLKF), 146 to 182 (VTFC…GYVI), 201 to 235 (HISD…DYRY), 241 to 273 (IHSV…PAKP), 295 to 337 (PILK…KSTA), 345 to 379 (IVDF…LIDL), 401 to 478 (TCCE…YKLK), 506 to 620 (QIIS…ELVI), and 634 to 696 (TSLA…SGAG). Disordered regions lie at residues 555 to 596 (VDTP…GLRD) and 675 to 731 (SNDP…QKVN). At Ser693 the chain carries Phosphoserine. The segment covering 713–722 (SPTSGSSSPH) has biased composition (low complexity). 2 positions are modified to phosphoserine: Ser724 and Ser760. Thr763 is subject to Phosphothreonine. Position 783 is a phosphoserine (Ser783). Thr785 is subject to Phosphothreonine. Ser786 bears the Phosphoserine mark. WD repeat units follow at residues 795–852 (ISAL…SGTI), 861–935 (RMAF…QSCA), 940–984 (ITET…LDVY), and 998–1021 (CFAN…TYSQ). Residues 883–893 (NVAEEKDEKEK) show a composition bias toward basic and acidic residues. The interval 883–907 (NVAEEKDEKEKLKKRRPVSVSPSSS) is disordered. 2 positions are modified to phosphoserine: Ser901 and Ser903. Thr1040 bears the Phosphothreonine mark. 2 positions are modified to phosphoserine: Ser1059 and Ser1132. Residues 1087–1147 (GIEGVKGAAS…HEMMLKYKDK (61 aa)) form the v-SNARE coiled-coil homology domain.

The protein belongs to the WD repeat L(2)GL family. Part of a complex that contains STX1, STXBP5, SNAP25 and SYT1. Interacts with STX1A and STX4A via its v-SNARE homology domain. Part of a complex that contains STXBP5, STX4A and SNAP23. Detected in heart, spleen, lung, skeletal muscle, liver and kidney (at protein level). Detected in brain, particularly in the olfactory bulb and in hippocampus. Detected in the tenia tecta and in the piriform layer of the brain cortex.

The protein resides in the cytoplasm. It is found in the cell membrane. Its subcellular location is the membrane. Plays a regulatory role in calcium-dependent exocytosis and neurotransmitter release. Inhibits membrane fusion between transport vesicles and the plasma membrane. May modulate the assembly of trans-SNARE complexes between transport vesicles and the plasma membrane. Competes with STXBP1 for STX1 binding. Inhibits translocation of GLUT4 from intracellular vesicles to the plasma membrane. This is Syntaxin-binding protein 5 (Stxbp5) from Mus musculus (Mouse).